A 102-amino-acid chain; its full sequence is Putative sortase YwpE (102 aa).

The active-site Proton donor/acceptor is the His-17. Residue Cys-78 is the Acyl-thioester intermediate of the active site.

It belongs to the bacterial sortase family.

Seems not to play a major role if any as a sortase. This is Putative sortase YwpE (ywpE) from Bacillus subtilis (strain 168).